A 625-amino-acid chain; its full sequence is MARTAPAASFESLESDLDQKFAYPASSKTYITGSRPDIRVPLRTILQTATRTEKGEMANPPIPVYDTSGPYSDPDVHIDLKAGLPPVRAKWIEERNDTEVLTGLSSEYGLARANDPATAHLRFAQLTNPRRAKAGANVSQMHYARKGIITPEMEYVALRESLNLQALYDKPEYKALLRQHPGNALGAALPLRPEDMTPEFVRREVAAGRAIIPANINHTELEPMAIGRNFRVKINGNLGNSAVTSSLAEEVEKMVWSIRWGADTIMDLSTGKHIHETREWILRNSPVPIGTVPIYQALDKTGGIAEDLTWEMFRDTLIEQAEQGVDYFTIHAGVLLRYVPMTADRVTGIVSRGGSIMAKWCLAHHKENFLYTHFDEICEIMKAYDVSFSLGDGLRPGCIADSNDDAQFGELRTLGELTAKAWEHDVQVMIEGPGHVPLQRIQANMDEELKHCYEAPFYTLGPLVTDIAPGYDHITSGIGAANIGWMGTAMLCYVTPKEHLGLPDKEDVREGIITYKIAAHAADLAKGWPGAQLRDNALSKARFEFRWEDQFNLGLDPERARSFHDATLPAEGAKIAHFCSMCGPKFCSMKITQEVRDYAASLPEAERGMQEKSIEFVKTGSKIYS.

Residues N237, M266, Y295, H331, 351–353, 392–395, and E431 contribute to the substrate site; these read SRG and DGLR. Position 435 (H435) interacts with Zn(2+). Y458 is a substrate binding site. H499 contributes to the Zn(2+) binding site. [4Fe-4S] cluster-binding residues include C579, C582, and C587.

It belongs to the ThiC family. As to quaternary structure, homodimer. The cofactor is [4Fe-4S] cluster.

It carries out the reaction 5-amino-1-(5-phospho-beta-D-ribosyl)imidazole + S-adenosyl-L-methionine = 4-amino-2-methyl-5-(phosphooxymethyl)pyrimidine + CO + 5'-deoxyadenosine + formate + L-methionine + 3 H(+). It participates in cofactor biosynthesis; thiamine diphosphate biosynthesis. Catalyzes the synthesis of the hydroxymethylpyrimidine phosphate (HMP-P) moiety of thiamine from aminoimidazole ribotide (AIR) in a radical S-adenosyl-L-methionine (SAM)-dependent reaction. This is Phosphomethylpyrimidine synthase from Cupriavidus metallidurans (strain ATCC 43123 / DSM 2839 / NBRC 102507 / CH34) (Ralstonia metallidurans).